The following is a 336-amino-acid chain: Cytoskeleton protein RodZ (336 aa).

The Cytoplasmic portion of the chain corresponds to Met1–Gly111. The HTH cro/C1-type domain maps to Leu19–Leu71. The H-T-H motif DNA-binding region spans Gln30–Glu49. The chain crosses the membrane as a helical; Signal-anchor for type II membrane protein span at residues Trp112–Trp132. At Trp133–Gln336 the chain is on the periplasmic side. The segment covering Ala152–Ser164 has biased composition (low complexity). The tract at residues Ala152–Gln235 is disordered. Polar residues-rich tracts occupy residues Val165 to Pro190 and Pro200 to Val217. The span at Ala220–Gln235 shows a compositional bias: low complexity.

The protein belongs to the RodZ family.

It localises to the cell inner membrane. In terms of biological role, cytoskeletal protein that is involved in cell-shape control through regulation of the length of the long axis. The sequence is that of Cytoskeleton protein RodZ from Enterobacter sp. (strain 638).